The primary structure comprises 364 residues: CCA-adding enzyme (364 aa).

ATP contacts are provided by Gly-19 and Arg-22. 2 residues coordinate CTP: Gly-19 and Arg-22. Residues Asp-32 and Asp-34 each coordinate Mg(2+). ATP-binding residues include Arg-102, Arg-148, and Arg-151. Positions 102, 148, and 151 each coordinate CTP.

This sequence belongs to the tRNA nucleotidyltransferase/poly(A) polymerase family. Bacterial CCA-adding enzyme type 2 subfamily. Mg(2+) is required as a cofactor.

The catalysed reaction is a tRNA precursor + 2 CTP + ATP = a tRNA with a 3' CCA end + 3 diphosphate. It catalyses the reaction a tRNA with a 3' CCA end + 2 CTP + ATP = a tRNA with a 3' CCACCA end + 3 diphosphate. Catalyzes the addition and repair of the essential 3'-terminal CCA sequence in tRNAs without using a nucleic acid template. Adds these three nucleotides in the order of C, C, and A to the tRNA nucleotide-73, using CTP and ATP as substrates and producing inorganic pyrophosphate. tRNA 3'-terminal CCA addition is required both for tRNA processing and repair. Also involved in tRNA surveillance by mediating tandem CCA addition to generate a CCACCA at the 3' terminus of unstable tRNAs. While stable tRNAs receive only 3'-terminal CCA, unstable tRNAs are marked with CCACCA and rapidly degraded. In Bordetella bronchiseptica (strain ATCC BAA-588 / NCTC 13252 / RB50) (Alcaligenes bronchisepticus), this protein is CCA-adding enzyme.